The chain runs to 438 residues: 3-phosphoshikimate 1-carboxyvinyltransferase (438 aa).

K21 is a phosphoenolpyruvate binding site. 2 residues coordinate 3-phosphoshikimate: S22 and R26. The segment at 93 to 96 (NSGT) is phosphoenolpyruvate. The phosphoenolpyruvate site is built by G95, T96, and R123. 3-phosphoshikimate-binding residues include S167, A168, Q169, D315, and K342. Q169 provides a ligand contact to phosphoenolpyruvate. The active-site Proton acceptor is D315. Phosphoenolpyruvate contacts are provided by R346 and R387.

This sequence belongs to the EPSP synthase family. Homodimer or homotetramer.

It localises to the cytoplasm. The catalysed reaction is 3-phosphoshikimate + phosphoenolpyruvate = 5-O-(1-carboxyvinyl)-3-phosphoshikimate + phosphate. Its pathway is metabolic intermediate biosynthesis; chorismate biosynthesis; chorismate from D-erythrose 4-phosphate and phosphoenolpyruvate: step 6/7. Its function is as follows. Catalyzes the transfer of the enolpyruvyl moiety of phosphoenolpyruvate (PEP) to the 5-hydroxyl of shikimate-3-phosphate (S3P) to produce enolpyruvyl shikimate-3-phosphate and inorganic phosphate. This Coxiella burnetii (strain RSA 493 / Nine Mile phase I) protein is 3-phosphoshikimate 1-carboxyvinyltransferase.